A 670-amino-acid chain; its full sequence is ATP synthase subunit alpha 2 (670 aa).

180-187 is a binding site for ATP; sequence GDRATGKT. Residues 527-670 are disordered; the sequence is AEDAAGDIGG…DAEAEARHKR (144 aa). Residues 543–588 show a composition bias toward basic and acidic residues; it reads ARGDADRDADHGANREVSREVSPEASREVSREVSREVSHEADRDAA. The segment covering 589-599 has biased composition (low complexity); sequence ADAARVAGRAP. Residues 621–639 show a composition bias toward basic and acidic residues; that stretch reads ADGDRASASRPRPDARGDA. The span at 640-661 shows a compositional bias: low complexity; it reads ARTAPSPQGGAEVNVNAAANVD.

Belongs to the ATPase alpha/beta chains family. F-type ATPases have 2 components, CF(1) - the catalytic core - and CF(0) - the membrane proton channel. CF(1) has five subunits: alpha(3), beta(3), gamma(1), delta(1), epsilon(1). CF(0) has three main subunits: a(1), b(2) and c(9-12). The alpha and beta chains form an alternating ring which encloses part of the gamma chain. CF(1) is attached to CF(0) by a central stalk formed by the gamma and epsilon chains, while a peripheral stalk is formed by the delta and b chains.

The protein localises to the cell inner membrane. The enzyme catalyses ATP + H2O + 4 H(+)(in) = ADP + phosphate + 5 H(+)(out). Its function is as follows. Produces ATP from ADP in the presence of a proton gradient across the membrane. The alpha chain is a regulatory subunit. This is ATP synthase subunit alpha 2 from Burkholderia pseudomallei (strain 668).